A 227-amino-acid chain; its full sequence is MKMSNKKRNADKKPLMYIVQPDYAETTRSSMQEIVIKRKADKPAPPKAEEKPAYHEKQQEEAVAQDVLQEDQKPAAEPVSQQTQEAREPENIKSQEEQKAEPQAVEETVEHEPPKAEKKEEPALEARKPEKEPEAVHSADKAEEKAPPARKVKKPMSKMTIHEKIDFLTKLPHNMPRALCLIEANGRTYRGVIVGRRNDSVLLRTTGNGAPTELAIDDITSLHPLGF.

A compositionally biased stretch (basic residues) spans 1–10 (MKMSNKKRNA). The disordered stretch occupies residues 1–157 (MKMSNKKRNA…PARKVKKPMS (157 aa)). Composition is skewed to basic and acidic residues over residues 35–60 (VIKR…KQQE), 85–100 (EARE…EQKA), and 108–147 (TVEH…EKAP).

It is found in the spore coat. Has an important morphogenetic role. Involved in the assembly of at least five coat proteins, including CotB, CotG, CotS, CotSA and CotW. Required for appearance of a morphologically normal outer coat. To a large degree, CotO and CotH act at a late stage of coat assembly from within the outer coat to direct maturation of this structure. The protein is Spore coat protein O (cotO) of Bacillus subtilis (strain 168).